The primary structure comprises 424 residues: Enolase (424 aa).

Residue Gln164 coordinates (2R)-2-phosphoglycerate. Glu206 acts as the Proton donor in catalysis. Mg(2+) is bound by residues Asp243, Glu284, and Asp311. Lys336, Arg365, Ser366, and Lys387 together coordinate (2R)-2-phosphoglycerate. Residue Lys336 is the Proton acceptor of the active site.

Belongs to the enolase family. Mg(2+) serves as cofactor.

The protein localises to the cytoplasm. Its subcellular location is the secreted. It localises to the cell surface. The catalysed reaction is (2R)-2-phosphoglycerate = phosphoenolpyruvate + H2O. It functions in the pathway carbohydrate degradation; glycolysis; pyruvate from D-glyceraldehyde 3-phosphate: step 4/5. Catalyzes the reversible conversion of 2-phosphoglycerate (2-PG) into phosphoenolpyruvate (PEP). It is essential for the degradation of carbohydrates via glycolysis. The polypeptide is Enolase (Wolbachia sp. subsp. Drosophila simulans (strain wRi)).